Reading from the N-terminus, the 728-residue chain is MMWGTKLLPVLLLQHVLLHLLLLPVTIPYAEGQKKRRNTLHEFKKSAKTTLTKEDPLVKIKTKKVNSADECANRCIRNKGFPFTCKAFVFDKSRKRCYWYPFNSMSSGVKKGFGHEFDLYENKDYIRNCIIGKGGSYKGTVSITKSGIKCQPWNSMIPHEHSFLPSSYRGKDLQENYCRNPRGEEGGPWCFTSNPEVRYEVCDIPQCSEVECMTCNGESYRGPMDHTESGKTCQRWDQQTPHRHKFLPERYPDKGFDDNYCRNPDGKPRPWCYTLDPDTPWEYCAIKMCAHSAVNETDVPMETTECIKGQGEGYRGTTNTIWNGIPCQRWDSQYPHKHDITPENFKCKDLRENYCRNPDGAESPWCFTTDPNIRVGYCSQIPKCDVSSGQDCYRGNGKNYMGNLSKTRSGLTCSMWDKNMEDLHRHIFWEPDASKLTKNYCRNPDDDAHGPWCYTGNPLVPWDYCPISRCEGDTTPTIVNLDHPVISCAKTKQLRVVNGIPTQTTVGWMVSLKYRNKHICGGSLIKESWVLTARQCFPARNKDLKDYEAWLGIHDVHERGEEKRKQILNISQLVYGPEGSDLVLLKLARPAILDNFVSTIDLPSYGCTIPEKTTCSIYGWGYTGLINADGLLRVAHLYIMGNEKCSQHHQGKVTLNESELCAGAEKIGSGPCEGDYGGPLICEQHKMRMVLGVIVPGRGCAIPNRPGIFVRVAYYAKWIHKVILTYKL.

Positions 1–32 (MMWGTKLLPVLLLQHVLLHLLLLPVTIPYAEG) are cleaved as a signal peptide. Glutamine 33 is modified (pyrrolidone carboxylic acid). Residues 38–124 (NTLHEFKKSA…HEFDLYENKD (87 aa)) enclose the PAN domain. Disulfide bonds link cysteine 71/cysteine 97, cysteine 75/cysteine 85, cysteine 129/cysteine 207, cysteine 150/cysteine 190, cysteine 178/cysteine 202, cysteine 212/cysteine 289, cysteine 233/cysteine 272, and cysteine 261/cysteine 284. Kringle domains follow at residues 129 to 207 (CIIG…IPQC) and 212 to 289 (CMTC…IKMC). The N-linked (GlcNAc...) asparagine glycan is linked to asparagine 295. Disulfide bonds link cysteine 306–cysteine 384, cysteine 327–cysteine 366, cysteine 355–cysteine 378, cysteine 392–cysteine 470, cysteine 413–cysteine 453, cysteine 441–cysteine 465, cysteine 488–cysteine 607, cysteine 520–cysteine 536, cysteine 615–cysteine 682, cysteine 645–cysteine 661, and cysteine 672–cysteine 700. Kringle domains are found at residues 306 to 384 (CIKG…IPKC) and 392 to 470 (CYRG…ISRC). Asparagine 403 carries an N-linked (GlcNAc...) asparagine glycan. The 229-residue stretch at 496–724 (VVNGIPTQTT…YAKWIHKVIL (229 aa)) folds into the Peptidase S1 domain. 2 N-linked (GlcNAc...) asparagine glycosylation sites follow: asparagine 569 and asparagine 656.

It belongs to the peptidase S1 family. Plasminogen subfamily. In terms of assembly, dimer of an alpha chain and a beta chain linked by a disulfide bond. Interacts with SRPX2; the interaction increases HGF mitogenic activity. In terms of processing, the single-chain precursor undergoes proteolytic processing by TMPRSS13 resulting in an active two-chain form. The single-chain precursor undergoes proteolytic processing by HGFAC resulting in an active two-chain form.

Potent mitogen for mature parenchymal hepatocyte cells, seems to be a hepatotrophic factor, and acts as a growth factor for a broad spectrum of tissues and cell types. Activating ligand for the receptor tyrosine kinase MET by binding to it and promoting its dimerization. Activates MAPK signaling following TMPRSS13 cleavage and activation. The polypeptide is Hepatocyte growth factor (Hgf) (Rattus norvegicus (Rat)).